Here is a 365-residue protein sequence, read N- to C-terminus: Zinc finger MYND domain-containing protein 12 (365 aa).

Positions 17, 20, 28, 31, 37, 41, 50, and 54 each coordinate Zn(2+). An MYND-type; atypical zinc finger spans residues Cys-17–Cys-54. TPR repeat units follow at residues Ser-172–Ala-205 and Ser-214–Tyr-247.

Expressed predominantly in the testis.

It localises to the cell projection. The protein resides in the cilium. It is found in the flagellum. Its function is as follows. Required for sperm flagellum function and male fertility. The chain is Zinc finger MYND domain-containing protein 12 (ZMYND12) from Homo sapiens (Human).